Reading from the N-terminus, the 116-residue chain is uncharacterized protein (116 aa).

The tract at residues 77–116 (SATSHYPKADDPQRFARSVSRGPSRVRRPARNSASRPVRR) is disordered.

This is an uncharacterized protein from Frog virus 3 (isolate Goorha) (FV-3).